The following is a 272-amino-acid chain: Phosphatidylglycerol--prolipoprotein diacylglyceryl transferase (272 aa).

A run of 4 helical transmembrane segments spans residues 24-44 (WYAL…RHLV), 64-84 (LLVY…VVFY), 99-119 (LWQG…GVML), and 125-145 (GLPT…GLFL). R147 is an a 1,2-diacyl-sn-glycero-3-phospho-(1'-sn-glycerol) binding site. 3 consecutive transmembrane segments (helical) span residues 185 to 205 (AAAE…LGAL), 209 to 229 (GLVT…CEFF), and 245 to 265 (MGML…AFAY).

The protein belongs to the Lgt family.

It localises to the cell inner membrane. The enzyme catalyses L-cysteinyl-[prolipoprotein] + a 1,2-diacyl-sn-glycero-3-phospho-(1'-sn-glycerol) = an S-1,2-diacyl-sn-glyceryl-L-cysteinyl-[prolipoprotein] + sn-glycerol 1-phosphate + H(+). It functions in the pathway protein modification; lipoprotein biosynthesis (diacylglyceryl transfer). Its function is as follows. Catalyzes the transfer of the diacylglyceryl group from phosphatidylglycerol to the sulfhydryl group of the N-terminal cysteine of a prolipoprotein, the first step in the formation of mature lipoproteins. This is Phosphatidylglycerol--prolipoprotein diacylglyceryl transferase from Methylocella silvestris (strain DSM 15510 / CIP 108128 / LMG 27833 / NCIMB 13906 / BL2).